A 253-amino-acid polypeptide reads, in one-letter code: Hydroxypyruvate/pyruvate aldolase (253 aa).

Residue H48 is the Proton acceptor of the active site. E151 and D177 together coordinate a divalent metal cation.

The protein belongs to the HpcH/HpaI aldolase family. It depends on a divalent metal cation as a cofactor.

It catalyses the reaction D-glyceraldehyde + pyruvate = 2-dehydro-3-deoxy-L-galactonate. In terms of biological role, aldolase which can catalyze in vitro the aldolisation reaction between hydroxypyruvate (HPA) or pyruvate (PA) and D-glyceraldehyde (D-GA). The condensation of pyruvate and D-glyceraldehyde produces 2-dehydro-3-deoxy-L-galactonate. Has weak activity with hydroxypyruvate and D-glyceraldehyde. This chain is Hydroxypyruvate/pyruvate aldolase, found in Sagittula stellata (strain ATCC 700073 / DSM 11524 / E-37).